Here is an 89-residue protein sequence, read N- to C-terminus: Putative defensin-like protein 230 (89 aa).

The N-terminal stretch at 1 to 26 (MRSVIWFIVSYTLMLLVLRGGKEVEA) is a signal peptide. Cystine bridges form between Cys-30/Cys-84, Cys-40/Cys-65, Cys-48/Cys-78, and Cys-63/Cys-80.

It belongs to the DEFL family.

It is found in the secreted. This chain is Putative defensin-like protein 230 (SCRL24), found in Arabidopsis thaliana (Mouse-ear cress).